A 266-amino-acid chain; its full sequence is Glutamate racemase (266 aa).

Substrate is bound by residues 9–10 (DS) and 41–42 (YG). Catalysis depends on cysteine 73, which acts as the Proton donor/acceptor. Residue 74 to 75 (NS) coordinates substrate. Cysteine 183 functions as the Proton donor/acceptor in the catalytic mechanism. 184–185 (TH) is a binding site for substrate.

The protein belongs to the aspartate/glutamate racemases family.

The enzyme catalyses L-glutamate = D-glutamate. It functions in the pathway cell wall biogenesis; peptidoglycan biosynthesis. Provides the (R)-glutamate required for cell wall biosynthesis. In Shewanella halifaxensis (strain HAW-EB4), this protein is Glutamate racemase.